A 473-amino-acid chain; its full sequence is Photosystem II CP43 reaction center protein (473 aa).

Residues 1 to 14 (MKILYSLRRFYHVE) constitute a propeptide that is removed on maturation. At threonine 15 the chain carries N-acetylthreonine. Threonine 15 carries the post-translational modification Phosphothreonine. A run of 5 helical transmembrane segments spans residues 69-93 (LFEVAHFVPEKPMYEQGLILLPHLA), 134-155 (LLGPETLEESFPFFGYVWKDRN), 178-200 (KALYFGGVYDTWAPGGGDVRKIT), 255-275 (KPFAWARRAFVWSGEAYLSYS), and 291-312 (WFNNTAYPSEFYGPTGPEASQA). Glutamate 367 lines the [CaMn4O5] cluster pocket. The chain crosses the membrane as a helical span at residues 447-471 (RARAAAAGFEKGIDRDLEPVLYMNP).

It belongs to the PsbB/PsbC family. PsbC subfamily. PSII is composed of 1 copy each of membrane proteins PsbA, PsbB, PsbC, PsbD, PsbE, PsbF, PsbH, PsbI, PsbJ, PsbK, PsbL, PsbM, PsbT, PsbX, PsbY, PsbZ, Psb30/Ycf12, at least 3 peripheral proteins of the oxygen-evolving complex and a large number of cofactors. It forms dimeric complexes. It depends on Binds multiple chlorophylls and provides some of the ligands for the Ca-4Mn-5O cluster of the oxygen-evolving complex. It may also provide a ligand for a Cl- that is required for oxygen evolution. PSII binds additional chlorophylls, carotenoids and specific lipids. as a cofactor.

Its subcellular location is the plastid. The protein localises to the chloroplast thylakoid membrane. Its function is as follows. One of the components of the core complex of photosystem II (PSII). It binds chlorophyll and helps catalyze the primary light-induced photochemical processes of PSII. PSII is a light-driven water:plastoquinone oxidoreductase, using light energy to abstract electrons from H(2)O, generating O(2) and a proton gradient subsequently used for ATP formation. The chain is Photosystem II CP43 reaction center protein from Brachypodium distachyon (Purple false brome).